Consider the following 56-residue polypeptide: Protein YqiD (56 aa).

A helical membrane pass occupies residues 2 to 22 (FIAWYWIVLIALVVVGYFLHL).

The protein resides in the cell inner membrane. The chain is Protein YqiD from Escherichia coli (strain K12).